We begin with the raw amino-acid sequence, 159 residues long: Transcriptional repressor NrdR (159 aa).

Residues 1-11 (MQCPTCQNTDS) are compositionally biased toward polar residues. The disordered stretch occupies residues 1-21 (MQCPTCQNTDSRVLESRSADS). A zinc finger lies at 3 to 34 (CPTCQNTDSRVLESRSADSGKSVRRRRECLNC). The ATP-cone domain maps to 49–139 (VSVMKKDGSR…VYRKFNGVKD (91 aa)).

Belongs to the NrdR family. Zn(2+) is required as a cofactor.

In terms of biological role, negatively regulates transcription of bacterial ribonucleotide reductase nrd genes and operons by binding to NrdR-boxes. This is Transcriptional repressor NrdR from Prochlorococcus marinus (strain MIT 9215).